Reading from the N-terminus, the 404-residue chain is CD209 antigen (404 aa).

Over 1–37 (MSDSKEPRLQQLGLLEEEQLRGLGFRQTRGYKSLAGC) the chain is Cytoplasmic. 3 short sequence motifs (endocytosis signal) span residues 14-15 (LL), 16-18 (EEE), and 31-34 (YKSL). Residues 38-58 (LGHGPLVLQLLSFTLLAGLLV) form a helical; Signal-anchor for type II membrane protein membrane-spanning segment. Residues 59–404 (QVSKVPSSIS…APATPNPPPA (346 aa)) lie on the Extracellular side of the membrane. Asn-80 carries N-linked (GlcNAc...) asparagine glycosylation. Repeat copies occupy residues 96–118 (KLQE…PEKS), 119–141 (KLQE…PEKS), 142–164 (KLQE…PEKS), 165–187 (KMQE…PEKS), 188–210 (KQQE…PEKS), 211–233 (KQQE…PEKS), and 234–257 (KQQE…HPCP). The segment at 96–257 (KLQEIYQELT…AVERLCHPCP (162 aa)) is 7 X approximate tandem repeats. 3 cysteine pairs are disulfide-bonded: Cys-256-Cys-267, Cys-284-Cys-377, and Cys-356-Cys-369. Residues 263-378 (FQGNCYFMSN…CNLAKFWICK (116 aa)) enclose the C-type lectin domain. Ca(2+)-binding residues include Glu-347, Asn-349, Val-351, Glu-354, Asn-365, and Asp-366.

Homotetramer. Interacts with C1QBP; the interaction is indicative for a C1q:C1QBP:CD209 signaling complex. Interacts with ICAM2 and ICAM3 by binding to mannose-like carbohydrates. Interacts (via C-type lectin domain) with CEACAM1 (via Lewis X moieties); this interaction is regulated by the glycosylation pattern of CEACAM1 on cell types and regulates contact between dendritic cells and neutrophils. As to quaternary structure, (Microbial infection) Interacts with HIV-1 and HIV-2 gp120. In terms of assembly, (Microbial infection) Interacts with ebolavirus envelope glycoproteins. (Microbial infection) Interacts with cytomegalovirus gB protein. As to quaternary structure, (Microbial infection) Interacts with HCV E2 protein. In terms of assembly, (Microbial infection) Interacts with dengue virus major envelope protein E. (Microbial infection) Interacts with measles hemagglutinin. As to quaternary structure, (Microbial infection) Interacts with herpes simplex virus 1 surface proteins. In terms of assembly, (Microbial infection) Interacts with Influenzavirus A hemagglutinin. (Microbial infection) Interacts with SARS-CoV spike glycoprotein. As to quaternary structure, (Microbial infection) Interacts with Japanese encephalitis virus E protein. In terms of assembly, (Microbial infection) Interacts with Lassa virus Glycoprotein. (Microbial infection) Interacts with marburg virus glycoprotein. As to quaternary structure, (Microbial infection) Interacts with Respiratory syncytial virus glycoprotein G. In terms of assembly, (Microbial infection) Interacts with Rift valley fever virus and uukuniemi virus envelope glycoprotein. (Microbial infection) Interacts with west-nile virus envelope glycoprotein. As to quaternary structure, (Microbial infection) Interacts with whole M.bovis cells in a Ca(2+)-dependent and independent manner; in vitro experiments suggest it interacts with CH60.1 (groL1), DnaK, GADPH (gap) and LrpG. Predominantly expressed in dendritic cells and in DC-residing tissues. Also found in placental macrophages, endothelial cells of placental vascular channels, peripheral blood mononuclear cells, and THP-1 monocytes.

The protein resides in the cell membrane. It is found in the secreted. Functionally, pathogen-recognition receptor expressed on the surface of immature dendritic cells (DCs) and involved in initiation of primary immune response. Thought to mediate the endocytosis of pathogens which are subsequently degraded in lysosomal compartments. The receptor returns to the cell membrane surface and the pathogen-derived antigens are presented to resting T-cells via MHC class II proteins to initiate the adaptive immune response. Its function is as follows. On DCs it is a high affinity receptor for ICAM2 and ICAM3 by binding to mannose-like carbohydrates. May act as a DC rolling receptor that mediates transendothelial migration of DC presursors from blood to tissues by binding endothelial ICAM2. Seems to regulate DC-induced T-cell proliferation by binding to ICAM3 on T-cells in the immunological synapse formed between DC and T-cells. In terms of biological role, (Microbial infection) Acts as an attachment receptor for HIV-1 and HIV-2. (Microbial infection) Acts as an attachment receptor for Ebolavirus. Functionally, (Microbial infection) Acts as an attachment receptor for Cytomegalovirus. Its function is as follows. (Microbial infection) Acts as an attachment receptor for HCV. In terms of biological role, (Microbial infection) Acts as an attachment receptor for Dengue virus. (Microbial infection) Acts as an attachment receptor for Measles virus. Functionally, (Microbial infection) Acts as an attachment receptor for Herpes simplex virus 1. Its function is as follows. (Microbial infection) Acts as an attachment receptor for Influenzavirus A. In terms of biological role, (Microbial infection) Acts as an attachment receptor for SARS-CoV. (Microbial infection) Acts as an attachment receptor for Japanese encephalitis virus. Functionally, (Microbial infection) Acts as an attachment receptor for Lassa virus. Acts as an attachment receptor for Marburg virusn. Its function is as follows. (Microbial infection) Acts as an attachment receptor for Respiratory syncytial virus. In terms of biological role, (Microbial infection) Acts as an attachment receptor for Rift valley fever virus and uukuniemi virus. (Microbial infection) Acts as an attachment receptor for West-nile virus. Functionally, (Microbial infection) Probably recognizes in a calcium-dependent manner high mannose N-linked oligosaccharides in a variety of bacterial pathogen antigens, including Leishmania pifanoi LPG, Lewis-x antigen in Helicobacter pylori LPS, mannose in Klebsiella pneumonae LPS, di-mannose and tri-mannose in Mycobacterium tuberculosis ManLAM and Lewis-x antigen in Schistosoma mansoni SEA. Recognition of M.tuberculosis by dendritic cells occurs partially via this molecule. The chain is CD209 antigen (CD209) from Homo sapiens (Human).